Reading from the N-terminus, the 206-residue chain is FMN-dependent NADH:quinone oxidoreductase (206 aa).

FMN is bound by residues 15 to 17, 94 to 97, and 138 to 141; these read SVS, MYNF, and TRGG.

The protein belongs to the azoreductase type 1 family. As to quaternary structure, homodimer. FMN serves as cofactor.

The catalysed reaction is 2 a quinone + NADH + H(+) = 2 a 1,4-benzosemiquinone + NAD(+). It carries out the reaction N,N-dimethyl-1,4-phenylenediamine + anthranilate + 2 NAD(+) = 2-(4-dimethylaminophenyl)diazenylbenzoate + 2 NADH + 2 H(+). Quinone reductase that provides resistance to thiol-specific stress caused by electrophilic quinones. Functionally, also exhibits azoreductase activity. Catalyzes the reductive cleavage of the azo bond in aromatic azo compounds to the corresponding amines. The sequence is that of FMN-dependent NADH:quinone oxidoreductase from Rhizobium meliloti (strain 1021) (Ensifer meliloti).